The chain runs to 51 residues: Insulin (51 aa).

Disulfide bonds link cysteine 7/cysteine 37, cysteine 19/cysteine 50, and cysteine 36/cysteine 41.

It belongs to the insulin family. As to quaternary structure, heterodimer of a B chain and an A chain linked by two disulfide bonds.

It is found in the secreted. Insulin decreases blood glucose concentration. It increases cell permeability to monosaccharides, amino acids and fatty acids. It accelerates glycolysis, the pentose phosphate cycle, and glycogen synthesis in liver. The protein is Insulin (INS) of Meleagris gallopavo (Wild turkey).